A 164-amino-acid chain; its full sequence is Interleukin-31 (164 aa).

The first 23 residues, 1 to 23 (MASHSGPSTSVLFLFCCLGGWLA), serve as a signal peptide directing secretion. 2 N-linked (GlcNAc...) asparagine glycosylation sites follow: Asn67 and Asn100.

In terms of tissue distribution, detected at low levels in testis, bone marrow, skeletal muscle, kidney, colon, thymus, small intestine and trachea.

It is found in the secreted. Functionally, activates STAT3 and possibly STAT1 and STAT5 through the IL31 heterodimeric receptor composed of IL31RA and OSMR. May function in skin immunity. Enhances myeloid progenitor cell survival in vitro. Induces RETNLA and serum amyloid A protein expression in macrophages. The sequence is that of Interleukin-31 (IL31) from Homo sapiens (Human).